The sequence spans 322 residues: MKSCLLLFLIFSFLLSFSLAEQCGRQAGGALCPNGLCCSEFGWCGDTEAYCKQPGCQSQCGGTPPGPTGDLSGIISRSQFDDMLKHRNDNACPARGFYTYDAFINAAKSFPGFGTTGDTATRKKEIAAFFGQTSHETTGGWATAPDGPYSWGYCFKQEQNPSSNYCSPSAEWPCASGKSYYGRGPMQLSWNYNYGQCGRAIGSDLLNNPDLVSNDPVIAFKAAIWFWMTPQSPKPSCHAVIVGQWQPSDADRAAGRVPGYGVITNIINGGLECGRGQDARVADRIGFYQRYCNILGVNPGGNLDCYNQRSFASVNFFLDAAI.

An N-terminal signal peptide occupies residues 1–20 (MKSCLLLFLIFSFLLSFSLA). Residues 21–62 (EQCGRQAGGALCPNGLCCSEFGWCGDTEAYCKQPGCQSQCGG) enclose the Chitin-binding type-1 domain. Disulfide bonds link Cys23/Cys38, Cys32/Cys44, Cys37/Cys51, Cys56/Cys60, Cys92/Cys154, Cys166/Cys174, and Cys273/Cys305. The active-site Proton donor is the Glu136.

This sequence belongs to the glycosyl hydrolase 19 family. Chitinase class I subfamily. As to expression, high expression in roots, moderate in floral tissues and low in stems and leaves.

The catalysed reaction is Random endo-hydrolysis of N-acetyl-beta-D-glucosaminide (1-&gt;4)-beta-linkages in chitin and chitodextrins.. The polypeptide is Endochitinase CH25 (Brassica napus (Rape)).